Reading from the N-terminus, the 431-residue chain is Serine--tRNA ligase (431 aa).

237-239 (TAE) is an L-serine binding site. 268–270 (RSE) is an ATP binding site. Glutamate 291 serves as a coordination point for L-serine. ATP is bound at residue 355–358 (EISS). Position 390 (serine 390) interacts with L-serine.

The protein belongs to the class-II aminoacyl-tRNA synthetase family. Type-1 seryl-tRNA synthetase subfamily. As to quaternary structure, homodimer. The tRNA molecule binds across the dimer.

The protein resides in the cytoplasm. The catalysed reaction is tRNA(Ser) + L-serine + ATP = L-seryl-tRNA(Ser) + AMP + diphosphate + H(+). The enzyme catalyses tRNA(Sec) + L-serine + ATP = L-seryl-tRNA(Sec) + AMP + diphosphate + H(+). It functions in the pathway aminoacyl-tRNA biosynthesis; selenocysteinyl-tRNA(Sec) biosynthesis; L-seryl-tRNA(Sec) from L-serine and tRNA(Sec): step 1/1. In terms of biological role, catalyzes the attachment of serine to tRNA(Ser). Is also able to aminoacylate tRNA(Sec) with serine, to form the misacylated tRNA L-seryl-tRNA(Sec), which will be further converted into selenocysteinyl-tRNA(Sec). The polypeptide is Serine--tRNA ligase (Neisseria meningitidis serogroup B (strain ATCC BAA-335 / MC58)).